A 153-amino-acid chain; its full sequence is SKP1-like protein 5 (153 aa).

The interval 90–153 (MMAANYLNIQ…IREENQWAFQ (64 aa)) is interaction with the F-box domain of F-box proteins.

Belongs to the SKP1 family. Part of a SCF (SKP1-cullin-F-box) protein ligase complex. Interacts with PP2A13. Restricted to inflorescences, especially in the inflorescence meristem (IM).

It is found in the nucleus. Its pathway is protein modification; protein ubiquitination. In terms of biological role, involved in ubiquitination and subsequent proteasomal degradation of target proteins. Together with CUL1, RBX1 and a F-box protein, it forms a SCF E3 ubiquitin ligase complex. The functional specificity of this complex depends on the type of F-box protein. In the SCF complex, it serves as an adapter that links the F-box protein to CUL1. The polypeptide is SKP1-like protein 5 (ASK5) (Arabidopsis thaliana (Mouse-ear cress)).